The sequence spans 340 residues: Ketol-acid reductoisomerase (NADP(+)) (340 aa).

One can recognise a KARI N-terminal Rossmann domain in the interval 2–181; the sequence is AKVFYNGDIN…GSARAGVIET (180 aa). Residues 25–28, arginine 48, serine 52, and 82–85 each bind NADP(+); these read YGSQ and DEHQ. Histidine 107 is an active-site residue. Residue glycine 133 participates in NADP(+) binding. The KARI C-terminal knotted domain maps to 182 to 327; the sequence is TFQEETETDL…RELREMMPFV (146 aa). Residues aspartate 190, glutamate 194, glutamate 226, and glutamate 230 each contribute to the Mg(2+) site. Serine 251 lines the substrate pocket.

This sequence belongs to the ketol-acid reductoisomerase family. Mg(2+) is required as a cofactor.

The enzyme catalyses (2R)-2,3-dihydroxy-3-methylbutanoate + NADP(+) = (2S)-2-acetolactate + NADPH + H(+). The catalysed reaction is (2R,3R)-2,3-dihydroxy-3-methylpentanoate + NADP(+) = (S)-2-ethyl-2-hydroxy-3-oxobutanoate + NADPH + H(+). Its pathway is amino-acid biosynthesis; L-isoleucine biosynthesis; L-isoleucine from 2-oxobutanoate: step 2/4. It functions in the pathway amino-acid biosynthesis; L-valine biosynthesis; L-valine from pyruvate: step 2/4. In terms of biological role, involved in the biosynthesis of branched-chain amino acids (BCAA). Catalyzes an alkyl-migration followed by a ketol-acid reduction of (S)-2-acetolactate (S2AL) to yield (R)-2,3-dihydroxy-isovalerate. In the isomerase reaction, S2AL is rearranged via a Mg-dependent methyl migration to produce 3-hydroxy-3-methyl-2-ketobutyrate (HMKB). In the reductase reaction, this 2-ketoacid undergoes a metal-dependent reduction by NADPH to yield (R)-2,3-dihydroxy-isovalerate. The sequence is that of Ketol-acid reductoisomerase (NADP(+)) from Halalkalibacterium halodurans (strain ATCC BAA-125 / DSM 18197 / FERM 7344 / JCM 9153 / C-125) (Bacillus halodurans).